Consider the following 399-residue polypeptide: Elongation factor Tu (399 aa).

A tr-type G domain is found at 10 to 204 (KPHVNIGTIG…AVDTSIPEPE (195 aa)). The tract at residues 19–26 (GHVDHGKT) is G1. GTP is bound at residue 19-26 (GHVDHGKT). A Mg(2+)-binding site is contributed by Thr-26. Residues 60-64 (GITIN) are G2. Residues 81-84 (DCPG) are G3. Residues 81–85 (DCPGH) and 136–139 (NKCD) contribute to the GTP site. A G4 region spans residues 136–139 (NKCD). Residues 174–176 (SGL) are G5.

The protein belongs to the TRAFAC class translation factor GTPase superfamily. Classic translation factor GTPase family. EF-Tu/EF-1A subfamily. As to quaternary structure, monomer.

It is found in the cytoplasm. It catalyses the reaction GTP + H2O = GDP + phosphate + H(+). GTP hydrolase that promotes the GTP-dependent binding of aminoacyl-tRNA to the A-site of ribosomes during protein biosynthesis. The chain is Elongation factor Tu from Prochlorococcus marinus (strain MIT 9303).